Reading from the N-terminus, the 1017-residue chain is Dopamine dehydroxylase (1017 aa).

Residues 1–34 (MGNLTMSRRTFVKTAAITGAAAAAFGASTHTALA) constitute a signal peptide (tat-type signal). Residues 45–103 (DTVAVKTCCRGCGKMECGVKVIVQNGRAIRVEGDEGAFQSMGNCCTKSQSSIQAAYHPD) enclose the 4Fe-4S Mo/W bis-MGD-type domain. Positions 53, 56, 61, and 89 each coordinate [4Fe-4S] cluster. Residue Lys-91 is the Electron donor/acceptor of the active site.

This sequence belongs to the prokaryotic molybdopterin-containing oxidoreductase family. Requires [4Fe-4S] cluster as cofactor. The cofactor is Mo-bis(molybdopterin guanine dinucleotide). In terms of processing, predicted to be exported by the Tat system. The position of the signal peptide cleavage has not been experimentally proven.

The catalysed reaction is dopamine + AH2 = 3-tyramine + A + H2O. Involved in drug metabolism, as part of an interspecies gut bacterial pathway for Levodopa (L-dopa) metabolism, acting on dopamine produced by Enterecoccus L-dopa decarboxylase. Removes the para hydroxyl group of dopamine to produce m-tyramine (3-tyramine). It is possible that dopamine dehydroxylation influences the multiple side effects of L-dopa administration linked to dopamine production in the treatment of Parkinson's disease. The chain is Dopamine dehydroxylase from Eggerthella lenta (Eubacterium lentum).